A 654-amino-acid chain; its full sequence is MNGHLEAEEQQDQRPDQELTGSWGHGPRSTLVRAKAMAPPPPPLAASTPLLHGEFGSYPARGPRFALTLTSQALHIQRLRPKPEARPRGGLVPLAEVSGCCTLRSRSPSDSAAYFCIYTYPRGRRGARRRATRTFRADGAATYEENRAEAQRWATALTCLLRGLPLPGDGEITPDLLPRPPRLLLLVNPFGGRGLAWQWCKNHVLPMISEAGLSFNLIQTERQNHARELVQGLSLSEWDGIVTVSGDGLLHEVLNGLLDRPDWEEAVKMPVGILPCGSGNALAGAVNQHGGFEPALGLDLLLNCSLLLCRGGGHPLDLLSVTLASGSRCFSFLSVAWGFVSDVDIQSERFRALGSARFTLGTVLGLATLHTYRGRLSYLPATVEPASPTPAHSLPRAKSELTLTPDPAPPMAHSPLHRSVSDLPLPLPQPALASPGSPEPLPILSLNGGGPELAGDWGGAGDAPLSPDPLLSSPPGSPKAALHSPVSEGAPVIPPSSGLPLPTPDARVGASTCGPPDHLLPPLGTPLPPDWVTLEGDFVLMLAISPSHLGADLVAAPHARFDDGLVHLCWVRSGISRAALLRLFLAMERGSHFSLGCPQLGYAAARAFRLEPLTPRGVLTVDGEQVEYGPLQAQMHPGIGTLLTGPPGCPGREP.

Over residues 1-17 (MNGHLEAEEQQDQRPDQ) the composition is skewed to basic and acidic residues. Residues 1-28 (MNGHLEAEEQQDQRPDQELTGSWGHGPR) are disordered. A required for binding to sulfatide and phosphoinositides and for membrane localizatione region spans residues 1–175 (MNGHLEAEEQ…LPGDGEITPD (175 aa)). The Nuclear localization signal motif lies at 122–130 (RGRRGARRR). Residues 178 to 325 (PRPPRLLLLV…LDLLSVTLAS (148 aa)) enclose the DAGKc domain. ATP contacts are provided by residues 188–190 (NPF) and 220–224 (TERQN). 245 to 248 (SGDG) contacts substrate. The active-site Proton donor/acceptor is the aspartate 247. ATP is bound by residues glutamate 252 and 277-279 (GSG). Aspartate 344 provides a ligand contact to substrate. ATP contacts are provided by arginine 351 and arginine 357. Serine 387 carries the phosphoserine; by MAPK modification. Serine 393 and serine 399 each carry phosphoserine. The disordered stretch occupies residues 400 to 509 (ELTLTPDPAP…PLPTPDARVG (110 aa)). Positions 416 to 425 (LHRSVSDLPL) match the Nuclear export signal motif. Phosphoserine; by PKD is present on residues serine 419 and serine 421. Positions 447-461 (NGGGPELAGDWGGAG) are enriched in gly residues. Residues 462–482 (DAPLSPDPLLSSPPGSPKAAL) are compositionally biased toward low complexity. A Phosphoserine modification is found at serine 477. Position 614 is a phosphothreonine; by MAPK (threonine 614). ATP is bound at residue 622 to 624 (DGE).

Interacts with histone H3. Interacts with HDAC1, HDAC2, MBD2 and SIN3A. Interacts with EEF1A1; the interaction enhances SPHK2 kinase activity. Interacts with PHB2. The cofactor is Mg(2+). In terms of processing, phosphorylated by PKD on Ser-419 and Ser-421 upon PMA treatment. Phosphorylation induces export from the nucleus to the cytoplasm. Phosphorylated by MAPK1 and MAPK2 at Ser-387 and Thr-614, phosphorylation is induced by agonists such as EGF and PMA and increases kinase activity. Post-translationally, cleaved by CASP1 in apoptotic cells. The truncated form is released from cells. In terms of tissue distribution, mainly expressed in adult kidney, liver, and brain. Expressed in cerebral cortex and hippocampus (at protein level). Isoform 1 is the predominant form expressed in most tissues.

It is found in the cytoplasm. Its subcellular location is the nucleus. The protein resides in the endoplasmic reticulum. It localises to the mitochondrion inner membrane. The protein localises to the lysosome membrane. It catalyses the reaction a sphingoid base + ATP = a sphingoid 1-phosphate + ADP + H(+). The catalysed reaction is sphing-4-enine + ATP = sphing-4-enine 1-phosphate + ADP + H(+). The enzyme catalyses sphinganine + ATP = sphinganine 1-phosphate + ADP + H(+). It carries out the reaction (4R)-hydroxysphinganine + ATP = (4R)-hydroxysphinganine 1-phosphate + ADP + H(+). Inhibited by sulfatide. Kinase activity is increased by phosphorylation by MAPK2 upon PMA or EGF treatments. Functionally, catalyzes the phosphorylation of sphingosine to form sphingosine-1-phosphate (SPP), a lipid mediator with both intra- and extracellular functions. Also acts on D-erythro-dihydrosphingosine, D-erythro-sphingosine and L-threo-dihydrosphingosine. Binds phosphoinositides. In contrast to prosurvival SPHK1, has a positive effect on intracellular ceramide levels, inhibits cells growth and enhances apoptosis. In mitochondria, is important for cytochrome-c oxidase assembly and mitochondrial respiration. The SPP produced in mitochondria binds PHB2 and modulates the regulation via PHB2 of complex IV assembly and respiration. In nucleus, plays a role in epigenetic regulation of gene expression. Interacts with HDAC1 and HDAC2 and, through SPP production, inhibits their enzymatic activity, preventing the removal of acetyl groups from lysine residues with histones. Up-regulates acetylation of histone H3-K9, histone H4-K5 and histone H2B-K12. In nucleus, may have an inhibitory effect on DNA synthesis and cell cycle. In mast cells, is the main regulator of SPP production which mediates calcium influx, NF-kappa-B activation, cytokine production, such as TNF and IL6, and degranulation of mast cells. In dopaminergic neurons, is involved in promoting mitochondrial functions regulating ATP and ROS levels. Also involved in the regulation of glucose and lipid metabolism. This Homo sapiens (Human) protein is Sphingosine kinase 2.